The chain runs to 155 residues: Ribonuclease H (155 aa).

The RNase H type-1 domain maps to 1–142; the sequence is MLKQVEIFTD…CDELARAAAM (142 aa). Asp-10, Glu-48, Asp-70, and Asp-134 together coordinate Mg(2+).

This sequence belongs to the RNase H family. As to quaternary structure, monomer. It depends on Mg(2+) as a cofactor.

Its subcellular location is the cytoplasm. The catalysed reaction is Endonucleolytic cleavage to 5'-phosphomonoester.. In terms of biological role, endonuclease that specifically degrades the RNA of RNA-DNA hybrids. The polypeptide is Ribonuclease H (Escherichia fergusonii (strain ATCC 35469 / DSM 13698 / CCUG 18766 / IAM 14443 / JCM 21226 / LMG 7866 / NBRC 102419 / NCTC 12128 / CDC 0568-73)).